The primary structure comprises 168 residues: Vitelline membrane protein Vm26Ab (168 aa).

Positions 1–23 (MAFNFGHLLIAGLVALSAVSSET) are cleaved as a signal peptide. A propeptide spans 24 to 42 (IQLQPTQGILIPAPLAENI) (removed between stage 11 and 14 of oogenesis). Residues 43-46 (RVSR) form an essential for N-terminal propeptide removal. Potential serine protease cleavage site region. The segment at 52 to 119 (YGAAPAAPSY…PAYSAPASIP (68 aa)) is 8 X 8 AA approximate repeats of P-[AS]-Y-S-A-P-A-[AS]. A 1; half-length repeat occupies 55-58 (APAA). Repeat 2 spans residues 59 to 66 (PSYSAPAA). One copy of the 3; approximate repeat lies at 70 to 77 (QAYSAPAA). A run of 5 repeats spans residues 78–85 (PAYSAPAA), 86–93 (PAYSAPAA), 94–101 (PAYSAPAA), 102–109 (PAYSAPAA), and 110–117 (PAYSAPAS). In terms of domain architecture, VM spans 117–154 (SIPSPPCPKNYLFSCQPSLQPVPCSAPAQSYGSAGAYS). The propeptide at 155–168 (QYVPQYAVPFVREL) is removed between stage 9 and 12 of oogenesis.

It belongs to the vitelline membrane protein family. In terms of assembly, interacts with vml and Vm26Aa; forms part of a disulfide-linked network within the vitelline membrane of stage 10 egg chambers. Post-translationally, proteolytically processed after secretion into the perivitelline space. Undergoes several proteolytic processing steps during formation of the vitelline membrane; an initial processing step removing a C-terminal propeptide occurs between stage 9 and 12 of oogenesis while a second removing a N-terminal propeptide occurs between stage 11 and 14. Becomes part of a disulfide-linked network including other vitelline membrane proteins, including vml and Vm26Aa, during vitelline membrane biogenesis and maturation. Cys-123, Cys-131 and Cys-140 are involved in disulfide network formation, with Cys-131 being the most important. Undergoes both disulfide and non-disulfide cross-linking upon incorporation into the vitelline membrane. As to expression, follicle cells.

The protein resides in the secreted. Its subcellular location is the extracellular space. It is found in the extracellular matrix. Its function is as follows. Major early eggshell protein secreted by follicle cells into the perivitelline space and incorporated into the vitelline membrane. Involved in vitelline membrane biogenesis; forms a cross-linked network with other vitelline membrane components. The polypeptide is Vitelline membrane protein Vm26Ab (Drosophila melanogaster (Fruit fly)).